The following is a 1291-amino-acid chain: GRB10-interacting GYF protein 2 (1291 aa).

N-acetylalanine is present on Ala2. Phosphoserine occurs at positions 19, 26, and 30. Residues Arg107, Arg119, and Arg121 each carry the omega-N-methylarginine modification. The interval 112–132 is disordered; it reads GTVVGAPRGRSSSRGRGRGRG. Ser140 bears the Phosphoserine mark. Disordered stretches follow at residues 148–196, 209–248, and 267–484; these read FGRG…RKHE, REEQ…GWRE, and RGYR…TEPD. Arg150 is subject to Omega-N-methylarginine. The segment covering 152-183 has biased composition (basic and acidic residues); the sequence is GGREMHRSQSWEERGDRRFEKPGRKDVGRPNF. Phosphoserine occurs at positions 161, 190, and 237. Positions 226-248 are enriched in basic and acidic residues; sequence SRRDGERWRPHSPDGPRSTGWRE. The short motif at 281-311 is the DDX6 binding motif element; it reads DDRDSLPEWCLEDAEEEMGTFDSSGAFLSLK. Positions 290–299 are enriched in acidic residues; that stretch reads CLEDAEEEMG. A compositionally biased stretch (basic and acidic residues) spans 313–364; the sequence is VQKEPIPEEQEMDFRPVEEGEERSDSDSSHNEEAKEPDKTNRREGEKTDRAG. Polar residues predominate over residues 371 to 393; the sequence is VPQTSLSSARPGTPSDHQPQEAT. The residue at position 383 (Thr383) is a Phosphothreonine. Residues 394–415 are compositionally biased toward basic and acidic residues; that stretch reads QFERKDEPKAEQVEKAEEENRS. The 49-residue stretch at 534-582 folds into the GYF domain; sequence MQKWYYKDPQGEIQGPFNNQEMAEWFQAGYFTMSLLVKRACDESFQPLG. Residues 548 to 564 are required for GRB10-binding; that stretch reads GPFNNQEMAEWFQAGYF. Residue Ser594 is modified to Phosphoserine. 5 disordered regions span residues 732 to 794, 846 to 937, 958 to 998, 1011 to 1053, and 1090 to 1118; these read KAKA…QEEA, EEAA…SNTA, ERQL…SKPA, EARQ…SVWG, and KEVG…NRQN. The segment covering 846 to 898 has biased composition (basic and acidic residues); that stretch reads EEAAKWAREEEEAQRRLEENRLRMEEEAARLRHEEEERKRKELELQRQKDLMR. Residues 899–924 are compositionally biased toward low complexity; it reads QRQQQQEALRRLQQQQQQQQLAQMKL. Residues 925–937 are compositionally biased toward polar residues; it reads PSSSTWGQQSNTA. A compositionally biased stretch (basic and acidic residues) spans 958–973; sequence ERQLREEQRRQQRELM. Over residues 977–986 the composition is skewed to low complexity; it reads QQQQQQQQQQ. The residue at position 995 (Ser995) is a Phosphoserine. The segment covering 1015–1031 has biased composition (low complexity); the sequence is MQKQQQQQQQQQQQHQQ. Positions 1032–1053 are enriched in polar residues; sequence SNRARNSTHSNLHTSLGNSVWG. Low complexity predominate over residues 1096-1110; that stretch reads NSTNKNKNNASLSKS. Lys1129 is covalently cross-linked (Glycyl lysine isopeptide (Lys-Gly) (interchain with G-Cter in SUMO2)). Disordered regions lie at residues 1202 to 1223 and 1239 to 1263; these read AKQK…QDSV and QSNN…KMVR. A compositionally biased stretch (low complexity) spans 1208–1220; it reads QQRQQQQQQQQQQ. The residue at position 1276 (Ser1276) is a Phosphoserine.

This sequence belongs to the GIGYF family. In terms of assembly, component of the 4EHP-GYF2 complex, at least composed of EIF4E2, GIGYF2 and ZNF598. Interacts (via the 4EHP-binding motif) with EIF4E2; the interaction is direct. Interacts with ZFP36/TTP (via P-P-P-P-G repeats); the interaction is direct. Interacts with GRB10. Interacts (via DDX6 motif) with DDX6 (via RecA-like domain 2). In terms of tissue distribution, expressed in heart, liver, kidney and brain as well as in testis.

Its function is as follows. Key component of the 4EHP-GYF2 complex, a multiprotein complex that acts as a repressor of translation initiation. In the 4EHP-GYF2 complex, acts as a factor that bridges EIF4E2 to ZFP36/TTP, linking translation repression with mRNA decay. Also recruits and bridges the association of the 4EHP complex with the decapping effector protein DDX6, which is required for the ZFP36/TTP-mediated down-regulation of AU-rich mRNA. May act cooperatively with GRB10 to regulate tyrosine kinase receptor signaling, including IGF1 and insulin receptors. In association with EIF4E2, assists ribosome-associated quality control (RQC) by sequestering the mRNA cap, blocking ribosome initiation and decreasing the translational load on problematic messages. Part of a pathway that works in parallel to RQC-mediated degradation of the stalled nascent polypeptide. GIGYF2 and EIF4E2 work downstream and independently of ZNF598, which seems to work as a scaffold that can recruit them to faulty mRNA even if alternative recruitment mechanisms may exist. This Mus musculus (Mouse) protein is GRB10-interacting GYF protein 2.